Here is a 597-residue protein sequence, read N- to C-terminus: DNA import protein CedB (597 aa).

Residues 10-30 (VVLLILGIISFNLVFIILAII) form a helical membrane-spanning segment. 286–293 (GPTGSGKT) is a binding site for ATP.

The protein resides in the cell membrane. Its function is as follows. Part of the Ced system, which is involved in DNA import. The polypeptide is DNA import protein CedB (Sulfolobus acidocaldarius (strain ATCC 33909 / DSM 639 / JCM 8929 / NBRC 15157 / NCIMB 11770)).